We begin with the raw amino-acid sequence, 181 residues long: Copper-resistant cuproprotein CopI (181 aa).

An N-terminal signal peptide occupies residues 1-24 (MFPRRLLPASLIVLGVLFGASAQA). His-79, Cys-163, His-168, and Met-173 together coordinate Cu(2+).

The protein belongs to the CopI family.

The protein localises to the periplasm. Involved in copper tolerance. The protein is Copper-resistant cuproprotein CopI of Pseudomonas aeruginosa (strain ATCC 15692 / DSM 22644 / CIP 104116 / JCM 14847 / LMG 12228 / 1C / PRS 101 / PAO1).